Consider the following 431-residue polypeptide: Adenylosuccinate synthetase (431 aa).

GTP is bound by residues 12-18 and 40-42; these read GDEGKGK and GHT. D13 (proton acceptor) is an active-site residue. Residues D13 and G40 each coordinate Mg(2+). Residues 13–16, 38–41, T130, R144, Q225, T240, and R304 contribute to the IMP site; these read DEGK and NAGH. The active-site Proton donor is H41. A substrate-binding site is contributed by 300-306; sequence STTGRPR. Residues R306, 332 to 334, and 414 to 416 contribute to the GTP site; these read KMD and SIG.

The protein belongs to the adenylosuccinate synthetase family. In terms of assembly, homodimer. Mg(2+) is required as a cofactor.

The protein resides in the cytoplasm. It carries out the reaction IMP + L-aspartate + GTP = N(6)-(1,2-dicarboxyethyl)-AMP + GDP + phosphate + 2 H(+). It participates in purine metabolism; AMP biosynthesis via de novo pathway; AMP from IMP: step 1/2. Functionally, plays an important role in the de novo pathway of purine nucleotide biosynthesis. Catalyzes the first committed step in the biosynthesis of AMP from IMP. The sequence is that of Adenylosuccinate synthetase from Syntrophotalea carbinolica (strain DSM 2380 / NBRC 103641 / GraBd1) (Pelobacter carbinolicus).